The following is a 568-amino-acid chain: Tetratricopeptide repeat protein 22 (568 aa).

TPR repeat units follow at residues 66-99 (PAVR…DPGN), 101-133 (NAWA…MGLE), 155-190 (YAHG…GQQI), 203-237 (ATLF…LGEV), 260-294 (KDTF…AKNQ), 296-328 (PILN…LTDP), and 432-465 (PELQ…DDEG).

In Mus musculus (Mouse), this protein is Tetratricopeptide repeat protein 22 (Ttc22).